We begin with the raw amino-acid sequence, 501 residues long: Glycerol kinase (501 aa).

Residue threonine 12 participates in ADP binding. ATP contacts are provided by threonine 12, threonine 13, and serine 14. Residue threonine 12 coordinates sn-glycerol 3-phosphate. Arginine 16 lines the ADP pocket. Residues arginine 82, glutamate 83, tyrosine 134, and aspartate 244 each coordinate sn-glycerol 3-phosphate. Glycerol is bound by residues arginine 82, glutamate 83, tyrosine 134, aspartate 244, and glutamine 245. Threonine 266 and glycine 310 together coordinate ADP. ATP is bound by residues threonine 266, glycine 310, glutamine 314, and glycine 411. Residues glycine 411 and asparagine 415 each coordinate ADP.

It belongs to the FGGY kinase family.

It carries out the reaction glycerol + ATP = sn-glycerol 3-phosphate + ADP + H(+). It functions in the pathway polyol metabolism; glycerol degradation via glycerol kinase pathway; sn-glycerol 3-phosphate from glycerol: step 1/1. Its activity is regulated as follows. Inhibited by fructose 1,6-bisphosphate (FBP). Its function is as follows. Key enzyme in the regulation of glycerol uptake and metabolism. Catalyzes the phosphorylation of glycerol to yield sn-glycerol 3-phosphate. This Methylorubrum extorquens (strain PA1) (Methylobacterium extorquens) protein is Glycerol kinase.